Consider the following 290-residue polypeptide: 33 kDa chaperonin (290 aa).

Intrachain disulfides connect C235-C237 and C268-C271.

It belongs to the HSP33 family. Post-translationally, under oxidizing conditions two disulfide bonds are formed involving the reactive cysteines. Under reducing conditions zinc is bound to the reactive cysteines and the protein is inactive.

It is found in the cytoplasm. Its function is as follows. Redox regulated molecular chaperone. Protects both thermally unfolding and oxidatively damaged proteins from irreversible aggregation. Plays an important role in the bacterial defense system toward oxidative stress. The chain is 33 kDa chaperonin from Streptococcus sanguinis (strain SK36).